The following is a 175-amino-acid chain: NADH-ubiquinone oxidoreductase chain 6 (175 aa).

Helical transmembrane passes span Met-1–Ser-21, Pro-25–Gly-45, Leu-51–Ile-71, Val-87–Phe-107, Glu-112–Phe-132, and Tyr-148–Ile-168.

Belongs to the complex I subunit 6 family. As to quaternary structure, core subunit of respiratory chain NADH dehydrogenase (Complex I) which is composed of 45 different subunits.

The protein resides in the mitochondrion inner membrane. The enzyme catalyses a ubiquinone + NADH + 5 H(+)(in) = a ubiquinol + NAD(+) + 4 H(+)(out). Its function is as follows. Core subunit of the mitochondrial membrane respiratory chain NADH dehydrogenase (Complex I) which catalyzes electron transfer from NADH through the respiratory chain, using ubiquinone as an electron acceptor. Essential for the catalytic activity and assembly of complex I. The polypeptide is NADH-ubiquinone oxidoreductase chain 6 (MT-ND6) (Loxodonta africana (African elephant)).